The primary structure comprises 360 residues: MNDKRVFNHVENNAGNEEEVFRVKREFSETAEIIPDLTALDDEREEKQALEGELLASQFEQAVRPRFRWWKRAVIAVAVLFLGATVAQSVQWLIDTWQANQWIYFAFAVVGCSVVGLGLSALGREFLRLRKLRQHLALRAESAVEFKDDFEIDKAKKLCGEITSSLGMDAQHPTVIQWQKQLNDGLTAREVGELFSKNVLYPIDNKAKKLITQSAVENGIVVAISPLAIVDMLFLAWRNTRLINRIANIYGIELGYWSRLRLMRMVFINMAFTGATELVQDIGLDWLSQDITAKLSGRIGQGLGVGLLTARLGIKTMEFCRPLTFNKDEKPRLSHIHRELLTSLKSVVLRSDKSRKKQNV.

3 helical membrane passes run 74–94, 102–122, and 215–235; these read VIAVAVLFLGATVAQSVQWLI, WIYFAFAVVGCSVVGLGLSAL, and AVENGIVVAISPLAIVDMLFL.

This sequence belongs to the UPF0283 family.

It is found in the cell inner membrane. This is UPF0283 membrane protein Asuc_0957 from Actinobacillus succinogenes (strain ATCC 55618 / DSM 22257 / CCUG 43843 / 130Z).